The primary structure comprises 235 residues: Glycerol-3-phosphate acyltransferase (235 aa).

6 helical membrane-spanning segments follow: residues 4–24 (LLAI…IMAG), 56–76 (TVTL…VAFF), 94–114 (LLAG…GFKG), 126–146 (IGIA…TVWF), 152–172 (VASI…KYVF), and 194–214 (SLDY…LFTH).

It belongs to the PlsY family. Probably interacts with PlsX.

It is found in the cell inner membrane. It carries out the reaction an acyl phosphate + sn-glycerol 3-phosphate = a 1-acyl-sn-glycero-3-phosphate + phosphate. It functions in the pathway lipid metabolism; phospholipid metabolism. Catalyzes the transfer of an acyl group from acyl-phosphate (acyl-PO(4)) to glycerol-3-phosphate (G3P) to form lysophosphatidic acid (LPA). This enzyme utilizes acyl-phosphate as fatty acyl donor, but not acyl-CoA or acyl-ACP. The polypeptide is Glycerol-3-phosphate acyltransferase (Chlorobium phaeovibrioides (strain DSM 265 / 1930) (Prosthecochloris vibrioformis (strain DSM 265))).